The sequence spans 319 residues: Ribosomal large subunit pseudouridine synthase C (319 aa).

The S4 RNA-binding domain maps to 20–83 (QRIDNFLRTQ…AEREEEAVSP (64 aa)). Asp-144 is a catalytic residue.

This sequence belongs to the pseudouridine synthase RluA family.

It carries out the reaction uridine(955/2504/2580) in 23S rRNA = pseudouridine(955/2504/2580) in 23S rRNA. In terms of biological role, responsible for synthesis of pseudouridine from uracil at positions 955, 2504 and 2580 in 23S ribosomal RNA. The chain is Ribosomal large subunit pseudouridine synthase C (rluC) from Escherichia coli O6:H1 (strain CFT073 / ATCC 700928 / UPEC).